The following is a 1674-amino-acid chain: Kinesin-like protein KIF14 (1674 aa).

Residues 1–391 form a required for PRC1-binding region; that stretch reads MSVHTSHSRH…TEPDSLKVEN (391 aa). Disordered stretches follow at residues 132-158 and 171-374; these read ETLNPVGGNPGSDSASQASRTEAKGVN and KDSN…PEEN. Composition is skewed to polar residues over residues 142–151 and 202–214; these read GSDSASQASR and SRAPVGSQRQTEA. At S257 the chain carries Phosphoserine. T262 carries the post-translational modification Phosphothreonine. Over residues 267–279 the composition is skewed to basic and acidic residues; the sequence is VLEHRWTPRHDPP. The segment covering 302–311 has biased composition (polar residues); sequence TFRSASSESR. A compositionally biased stretch (basic and acidic residues) spans 317–329; it reads VPEHRWTPRHDLP. Positions 391 to 772 are required for microtubule-binding with high affinity; sequence NSQVTVAVRV…AAQRSNRNID (382 aa). Residues 393-736 enclose the Kinesin motor domain; the sequence is QVTVAVRVRP…LRYATQARLI (344 aa). 482 to 489 serves as a coordination point for ATP; the sequence is GQTGSGKS. The stretch at 743 to 826 forms a coiled coil; that stretch reads NEDMNAKLIR…QETKELQKAG (84 aa). The FHA domain occupies 860–911; the sequence is TTVGKHTPSSSHDIQLSGVLIADDHCTIRNFGGTVSIVPAGEAKTYVNGTHI. Residues 936-1674 form a required for CIT-binding region; sequence PVEVQKGKKL…DCTPNRIQWV (739 aa). Positions 961–1110 form a coiled coil; sequence EFAKNELLTA…VQMLQENRGN (150 aa). Phosphoserine is present on residues S973 and S1326. The tract at residues 1618–1674 is disordered; it reads GLSKPWESCSSNSKEEQCKSDRADCGKSGPRRACEPHGDATPAVSSGDCTPNRIQWV. The segment covering 1630–1642 has biased composition (basic and acidic residues); that stretch reads SKEEQCKSDRADC. Polar residues predominate over residues 1660–1674; sequence AVSSGDCTPNRIQWV.

This sequence belongs to the TRAFAC class myosin-kinesin ATPase superfamily. Kinesin family. Directly interacts with PRC1 within a complex also containing KIF4A, KIF20A and KIF23; targets to the central spindle. Directly interacts with CIT depending on the activation state of the kinase (stronger interaction with the kinase-dead form); targets to the midbody. Interacts with ARRB2; the interaction is detected in the nucleus upon OR1D2 stimulation. Interacts with AKT1; the interaction is detected in the plasma membrane upon INS stimulation and promotes AKT1 phosphorylation. Interacts with SVIL; at midbody during cytokinesis. Interacts with RADIL (via PDZ domain); recruits RADIL to the microtubule network restricting RADIL from interaction with activated RAP1A.

The protein localises to the nucleus. Its subcellular location is the cytoplasm. It is found in the cytoskeleton. It localises to the spindle. The protein resides in the midbody. Microtubule motor protein that binds to microtubules with high affinity through each tubulin heterodimer and has an ATPase activity. Plays a role in many processes like cell division, cytokinesis and also in cell proliferation and apoptosis. During cytokinesis, targets to central spindle and midbody through its interaction with PRC1 and CIT respectively. Regulates cell growth through regulation of cell cycle progression and cytokinesis. During cell cycle progression acts through SCF-dependent proteasomal ubiquitin-dependent protein catabolic process which controls CDKN1B degradation, resulting in positive regulation of cyclins, including CCNE1, CCND1 and CCNB1. During late neurogenesis, regulates the cerebellar and cerebral cortex development and olfactory bulb development through regulation of apoptosis, cell proliferation and cell division. Also is required for chromosome congression and alignment during mitotic cell cycle process. Regulates cell spreading, focal adhesion dynamics, and cell migration through its interaction with RADIL resulting in regulation of RAP1A-mediated inside-out integrin activation by tethering RADIL on microtubules. This is Kinesin-like protein KIF14 from Mus musculus (Mouse).